Here is a 208-residue protein sequence, read N- to C-terminus: Small ribosomal subunit protein uS4 (208 aa).

The 63-residue stretch at 95-157 folds into the S4 RNA-binding domain; that stretch reads RRIDNVVYRA…DRLKKLVRSN (63 aa).

It belongs to the universal ribosomal protein uS4 family. Part of the 30S ribosomal subunit. Contacts protein S5. The interaction surface between S4 and S5 is involved in control of translational fidelity.

In terms of biological role, one of the primary rRNA binding proteins, it binds directly to 16S rRNA where it nucleates assembly of the body of the 30S subunit. With S5 and S12 plays an important role in translational accuracy. The sequence is that of Small ribosomal subunit protein uS4 from Borrelia turicatae (strain 91E135).